The primary structure comprises 187 residues: Large ribosomal subunit protein uL22 (187 aa).

Residues Ala161–Glu187 are disordered. Basic residues predominate over residues Lys169 to Ala178.

Belongs to the universal ribosomal protein uL22 family.

This is Large ribosomal subunit protein uL22 (RpL17) from Bombyx mori (Silk moth).